The following is a 271-amino-acid chain: uncharacterized protein (271 aa).

An N-terminal signal peptide occupies residues 1 to 22 (MARELLFLACAIVIADSWPAKA).

This is an uncharacterized protein from Sinorhizobium fredii (strain NBRC 101917 / NGR234).